The chain runs to 159 residues: D-aminoacyl-tRNA deacylase (159 aa).

Positions 142 to 143 match the Gly-cisPro motif, important for rejection of L-amino acids motif; sequence GP.

The protein belongs to the DTD family. As to quaternary structure, homodimer.

It localises to the cytoplasm. It catalyses the reaction glycyl-tRNA(Ala) + H2O = tRNA(Ala) + glycine + H(+). The catalysed reaction is a D-aminoacyl-tRNA + H2O = a tRNA + a D-alpha-amino acid + H(+). Functionally, an aminoacyl-tRNA editing enzyme that deacylates mischarged D-aminoacyl-tRNAs. Also deacylates mischarged glycyl-tRNA(Ala), protecting cells against glycine mischarging by AlaRS. Acts via tRNA-based rather than protein-based catalysis; rejects L-amino acids rather than detecting D-amino acids in the active site. By recycling D-aminoacyl-tRNA to D-amino acids and free tRNA molecules, this enzyme counteracts the toxicity associated with the formation of D-aminoacyl-tRNA entities in vivo and helps enforce protein L-homochirality. This is D-aminoacyl-tRNA deacylase from Albidiferax ferrireducens (strain ATCC BAA-621 / DSM 15236 / T118) (Rhodoferax ferrireducens).